The chain runs to 534 residues: Fimbrial subunit type 2 (534 aa).

Residues 1–32 form the signal peptide; that stretch reads MKYNTSTLGRRAAAAAGVLTLAVLGLAPMAQA. Disordered stretches follow at residues 56–76 and 329–376; these read GDGNPIGAPDGTASNDDGKGA and TYAE…DKDG. Residues 334–347 show a composition bias toward pro residues; sequence PPAPETPPANPDNP. Residues 361–376 show a composition bias toward basic and acidic residues; that stretch reads TIKKVDGNDRSGDKDG. Positions 492–496 match the LPXTG sorting signal motif; it reads LPLTG. Threonine 495 bears the Pentaglycyl murein peptidoglycan amidated threonine mark. A propeptide spans 496 to 534 (removed by sortase); it reads GANGMLILTASGAALLMIAVGSVLVARYRERKRNRDLAA.

The protein localises to the secreted. Its subcellular location is the cell wall. It localises to the fimbrium. In terms of biological role, major fimbrial subunit of A.naeslundii. The chain is Fimbrial subunit type 2 from Actinomyces naeslundii.